The chain runs to 423 residues: Serine--tRNA ligase (423 aa).

229–231 (TAE) contacts L-serine. 260–262 (RKE) serves as a coordination point for ATP. Glu-283 serves as a coordination point for L-serine. Residue 347 to 350 (EISS) coordinates ATP. Residue Ser-383 coordinates L-serine.

It belongs to the class-II aminoacyl-tRNA synthetase family. Type-1 seryl-tRNA synthetase subfamily. Homodimer. The tRNA molecule binds across the dimer.

It is found in the cytoplasm. The enzyme catalyses tRNA(Ser) + L-serine + ATP = L-seryl-tRNA(Ser) + AMP + diphosphate + H(+). It catalyses the reaction tRNA(Sec) + L-serine + ATP = L-seryl-tRNA(Sec) + AMP + diphosphate + H(+). It participates in aminoacyl-tRNA biosynthesis; selenocysteinyl-tRNA(Sec) biosynthesis; L-seryl-tRNA(Sec) from L-serine and tRNA(Sec): step 1/1. In terms of biological role, catalyzes the attachment of serine to tRNA(Ser). Is also able to aminoacylate tRNA(Sec) with serine, to form the misacylated tRNA L-seryl-tRNA(Sec), which will be further converted into selenocysteinyl-tRNA(Sec). The chain is Serine--tRNA ligase from Syntrophotalea carbinolica (strain DSM 2380 / NBRC 103641 / GraBd1) (Pelobacter carbinolicus).